Reading from the N-terminus, the 412-residue chain is Trehalose synthase (412 aa).

Belongs to the glycosyltransferase group 1 family. Glycosyltransferase 4 subfamily. Homodimer. Mg(2+) is required as a cofactor.

The catalysed reaction is an NDP-alpha-D-glucose + D-glucose = alpha,alpha-trehalose + a ribonucleoside 5'-diphosphate + H(+). Its function is as follows. Synthesizes trehalose from ADP-glucose and glucose. Has a much lower activity toward UDP-glucose and GDP-glucose. The reaction is reversible, the equilibrium strongly favors trehalose synthesis. The chain is Trehalose synthase from Pyrococcus furiosus (strain ATCC 43587 / DSM 3638 / JCM 8422 / Vc1).